A 428-amino-acid polypeptide reads, in one-letter code: Lipoamide acyltransferase component of branched-chain alpha-keto acid dehydrogenase complex (428 aa).

The Lipoyl-binding domain maps to 3 to 78; the sequence is THVIKMPDIG…AVGGELIRLE (76 aa). At Lys44 the chain carries N6-lipoyllysine. The interval 88-145 is disordered; that stretch reads SPAAATPAAPVAATPEKPKEAPVAAPKAAAEAPRALRDSEAPRQRRQPGERPLASPAV. Over residues 89 to 120 the composition is skewed to low complexity; the sequence is PAAATPAAPVAATPEKPKEAPVAAPKAAAEAP. Basic and acidic residues predominate over residues 121–136; that stretch reads RALRDSEAPRQRRQPG. A Peripheral subunit-binding (PSBD) domain is found at 140 to 177; sequence LASPAVRQRARDLGIELQFVQGSGPAGRVLHEDLDAYL. Residues His400 and Asp404 contribute to the active site.

This sequence belongs to the 2-oxoacid dehydrogenase family. Forms a 24-polypeptide structural core with octahedral symmetry. Requires (R)-lipoate as cofactor.

The catalysed reaction is N(6)-[(R)-dihydrolipoyl]-L-lysyl-[protein] + 2-methylpropanoyl-CoA = N(6)-[(R)-S(8)-2-methylpropanoyldihydrolipoyl]-L-lysyl-[protein] + CoA. In terms of biological role, the branched-chain alpha-keto dehydrogenase complex catalyzes the overall conversion of alpha-keto acids to acyl-CoA and CO(2). It contains multiple copies of three enzymatic components: branched-chain alpha-keto acid decarboxylase (E1), lipoamide acyltransferase (E2) and lipoamide dehydrogenase (E3). In Pseudomonas aeruginosa (strain ATCC 15692 / DSM 22644 / CIP 104116 / JCM 14847 / LMG 12228 / 1C / PRS 101 / PAO1), this protein is Lipoamide acyltransferase component of branched-chain alpha-keto acid dehydrogenase complex (bkdB).